The following is a 323-amino-acid chain: Polycomb complex protein BMI-1-B (323 aa).

Residues 18-57 form an RING-type zinc finger; that stretch reads CVLCGGYFIDAATIIECLHSFCKTCIVRYLETSKYCPICD. Residues 81 to 95 carry the Nuclear localization signal motif; the sequence is KLVPGLFKGEMKRRR. Residues 238 to 310 are disordered; sequence PHTDRINNTS…HQNPFANRAR (73 aa). A compositionally biased stretch (low complexity) spans 287-301; it reads HISSTINGTNSSSSH.

In terms of assembly, component of a PRC1-like complex. Interacts with cbx4.

The protein localises to the nucleus. In terms of biological role, component of a Polycomb group (PcG) multiprotein PRC1-like complex, a complex class required to maintain the transcriptionally repressive state of many genes, including Hox genes, throughout development. PcG PRC1 complex acts via chromatin remodeling and modification of histones; it mediates monoubiquitination of histone H2A 'Lys-119', rendering chromatin heritably changed in its expressibility. In the PRC1 complex, it is required to stimulate the E3 ubiquitin-protein ligase activity of rnf2. The chain is Polycomb complex protein BMI-1-B (bmi1b) from Xenopus laevis (African clawed frog).